Reading from the N-terminus, the 271-residue chain is Mannosyl-3-phosphoglycerate phosphatase (271 aa).

Residue Asp13 is the Nucleophile of the active site. Positions 13, 15, and 214 each coordinate Mg(2+).

This sequence belongs to the HAD-like hydrolase superfamily. MPGP family. Requires Mg(2+) as cofactor.

It localises to the cytoplasm. The catalysed reaction is 2-O-(alpha-D-mannosyl)-3-phosphoglycerate + H2O = (2R)-2-O-(alpha-D-mannosyl)-glycerate + phosphate. In Escherichia coli (strain SMS-3-5 / SECEC), this protein is Mannosyl-3-phosphoglycerate phosphatase.